The chain runs to 159 residues: Large ribosomal subunit protein eL24 (159 aa).

The tract at residues 118–159 is disordered; sequence ANKAVRAAKAAANKEKKASQPKTQQKTAKNVKTAAPRVGGKR. Over residues 137-147 the composition is skewed to polar residues; it reads QPKTQQKTAKN.

The protein belongs to the eukaryotic ribosomal protein eL24 family.

The chain is Large ribosomal subunit protein eL24 from Caenorhabditis elegans.